The primary structure comprises 326 residues: Glutamine synthetase (326 aa).

One can recognise a GS beta-grasp domain in the interval 4-85; the sequence is FKLEYIWLDG…VMCEVMMPDG (82 aa). One can recognise a GS catalytic domain in the interval 83–326; that stretch reads PDGHAHASNA…GDPYQIVRRF (244 aa). Mg(2+) is bound by residues Glu107 and Glu109. Residue Glu164 participates in ATP binding. Residues Glu169 and Glu176 each contribute to the Mg(2+) site. Glu275 contacts L-glutamate.

This sequence belongs to the glutamine synthetase family. As to quaternary structure, homooctamer and homotetramer. Requires Mg(2+) as cofactor.

It is found in the cytoplasm. The catalysed reaction is L-glutamate + NH4(+) + ATP = L-glutamine + ADP + phosphate + H(+). Its activity is regulated as follows. Transferase activity is inhibited by NH(4)Cl. Functionally, catalyzes the ATP-dependent biosynthesis of glutamine from glutamate and ammonia. This chain is Glutamine synthetase, found in Rhizobium leguminosarum bv. phaseoli.